We begin with the raw amino-acid sequence, 319 residues long: Formimidoylglutamase (319 aa).

Mn(2+) is bound by residues His-131, Asp-154, His-156, Asp-158, Cys-248, and Asp-250.

It belongs to the arginase family. Requires Mn(2+) as cofactor.

The enzyme catalyses N-formimidoyl-L-glutamate + H2O = formamide + L-glutamate. Its pathway is amino-acid degradation; L-histidine degradation into L-glutamate; L-glutamate from N-formimidoyl-L-glutamate (hydrolase route): step 1/1. Catalyzes the conversion of N-formimidoyl-L-glutamate to L-glutamate and formamide. The chain is Formimidoylglutamase from Legionella pneumophila (strain Lens).